The primary structure comprises 216 residues: Maleylacetoacetate isomerase (216 aa).

Position 1 is an N-acetylmethionine (Met1). The region spanning Gly4–Arg87 is the GST N-terminal domain. Residues Ser14–Arg19 and Gln45 contribute to the glutathione site. Position 57 is an N6-succinyllysine (Lys57). Residues Val59, Gln71–Ser72, Gln111, and Asn115–Ser117 each bind glutathione. One can recognise a GST C-terminal domain in the interval Asp92–Ala212. Residue Thr136 is modified to Phosphothreonine. Residue Ser137 is modified to Phosphoserine. N6-succinyllysine is present on Lys177. Ser181 bears the Phosphoserine mark.

The protein belongs to the GST superfamily. Zeta family. As to quaternary structure, homodimer. Glutathione is required as a cofactor. In terms of processing, the N-terminus is blocked.

The protein resides in the cytoplasm. It catalyses the reaction 4-maleylacetoacetate = 4-fumarylacetoacetate. It carries out the reaction RX + glutathione = an S-substituted glutathione + a halide anion + H(+). Its pathway is amino-acid degradation; L-phenylalanine degradation; acetoacetate and fumarate from L-phenylalanine: step 5/6. Functionally, probable bifunctional enzyme showing minimal glutathione-conjugating activity with ethacrynic acid and 7-chloro-4-nitrobenz-2-oxa-1, 3-diazole and maleylacetoacetate isomerase activity. Also has low glutathione peroxidase activity with t-butyl and cumene hydroperoxides. Is able to catalyze the glutathione dependent oxygenation of dichloroacetic acid to glyoxylic acid. This chain is Maleylacetoacetate isomerase (Gstz1), found in Rattus norvegicus (Rat).